Here is a 154-residue protein sequence, read N- to C-terminus: Xanthine-guanine phosphoribosyltransferase (154 aa).

5-phospho-alpha-D-ribose 1-diphosphate contacts are provided by residues 37-38 (RG), Arg69, and 88-96 (EDLVDSGDT). Position 69 (Arg69) interacts with GMP. Asp89 serves as a coordination point for Mg(2+). Guanine-binding residues include Asp92 and Ile135. Positions 92 and 135 each coordinate xanthine. Residues 92–96 (DSGDT) and 134–135 (WI) contribute to the GMP site.

It belongs to the purine/pyrimidine phosphoribosyltransferase family. XGPT subfamily. In terms of assembly, homotetramer. Mg(2+) serves as cofactor.

The protein localises to the cell inner membrane. It carries out the reaction GMP + diphosphate = guanine + 5-phospho-alpha-D-ribose 1-diphosphate. The enzyme catalyses XMP + diphosphate = xanthine + 5-phospho-alpha-D-ribose 1-diphosphate. It catalyses the reaction IMP + diphosphate = hypoxanthine + 5-phospho-alpha-D-ribose 1-diphosphate. Its pathway is purine metabolism; GMP biosynthesis via salvage pathway; GMP from guanine: step 1/1. It functions in the pathway purine metabolism; XMP biosynthesis via salvage pathway; XMP from xanthine: step 1/1. Its function is as follows. Purine salvage pathway enzyme that catalyzes the transfer of the ribosyl-5-phosphate group from 5-phospho-alpha-D-ribose 1-diphosphate (PRPP) to the N9 position of the 6-oxopurines guanine and xanthine to form the corresponding ribonucleotides GMP (guanosine 5'-monophosphate) and XMP (xanthosine 5'-monophosphate), with the release of PPi. To a lesser extent, also acts on hypoxanthine. The polypeptide is Xanthine-guanine phosphoribosyltransferase (Vibrio parahaemolyticus serotype O3:K6 (strain RIMD 2210633)).